A 515-amino-acid chain; its full sequence is Germ cell-less protein-like 1 (515 aa).

Residues 1–35 (MGSLSSRVLRQPRPALAQQAQGARAGGSARRPDTG) are disordered. A compositionally biased stretch (low complexity) spans 11-29 (QPRPALAQQAQGARAGGSA). The Nuclear localization signal signature appears at 49–55 (SHKRKRS). The tract at residues 65-85 (DSETDEDEEEGDEQQRLLNTP) is disordered. Ser66 bears the Phosphoserine mark. Residues 67–76 (ETDEDEEEGD) are compositionally biased toward acidic residues. Phosphothreonine is present on Thr68. The Nuclear localization signal motif lies at 85-91 (PRRKKLK). In terms of domain architecture, BTB spans 108-178 (SDIKICALGE…LYRDDVLIKP (71 aa)).

In terms of assembly, interacts with TMPO-beta, TSG101 and TFDP2. Interacts with EMD.

Its subcellular location is the nucleus matrix. Functionally, possible function in spermatogenesis. Enhances the degradation of MDM2 and increases the amount of p53 probably by modulating the nucleocytoplasmic transport. The protein is Germ cell-less protein-like 1 (GMCL1) of Homo sapiens (Human).